An 89-amino-acid polypeptide reads, in one-letter code: Small ribosomal subunit protein uS15 (89 aa).

The protein belongs to the universal ribosomal protein uS15 family. Part of the 30S ribosomal subunit. Forms a bridge to the 50S subunit in the 70S ribosome, contacting the 23S rRNA.

Functionally, one of the primary rRNA binding proteins, it binds directly to 16S rRNA where it helps nucleate assembly of the platform of the 30S subunit by binding and bridging several RNA helices of the 16S rRNA. In terms of biological role, forms an intersubunit bridge (bridge B4) with the 23S rRNA of the 50S subunit in the ribosome. The protein is Small ribosomal subunit protein uS15 of Lactobacillus delbrueckii subsp. bulgaricus (strain ATCC 11842 / DSM 20081 / BCRC 10696 / JCM 1002 / NBRC 13953 / NCIMB 11778 / NCTC 12712 / WDCM 00102 / Lb 14).